A 210-amino-acid polypeptide reads, in one-letter code: Probable GTP-binding protein EngB (210 aa).

An EngB-type G domain is found at 25–199 (CGIEVAFAGR…RQKLDSWFSE (175 aa)). Residues 33-40 (GRSNAGKS), 60-64 (GRTQL), 78-81 (DLPG), 145-148 (TKAD), and 178-180 (FSS) each bind GTP. The Mg(2+) site is built by serine 40 and threonine 62.

Belongs to the TRAFAC class TrmE-Era-EngA-EngB-Septin-like GTPase superfamily. EngB GTPase family. Mg(2+) is required as a cofactor.

Functionally, necessary for normal cell division and for the maintenance of normal septation. In Salmonella paratyphi C (strain RKS4594), this protein is Probable GTP-binding protein EngB.